The sequence spans 951 residues: Serine/threonine-protein kinase 10 (951 aa).

One can recognise a Protein kinase domain in the interval 36 to 294 (WEIIGELGDG…AAQLLEHPFV (259 aa)). ATP-binding positions include 42–50 (LGDGAFGKV) and K65. The active-site Proton acceptor is D157. Acidic residues predominate over residues 319-330 (EENGEVEEEEAS). Residues 319–479 (EENGEVEEEE…DSGSNSASES (161 aa)) form a disordered region. The span at 331–343 (DTPSSNKSVSQSA) shows a compositional bias: polar residues. The span at 345 to 356 (GEKDKHTGKEHV) shows a compositional bias: basic and acidic residues. Positions 364-373 (PQNTDSQADI) are enriched in polar residues. 2 stretches are compositionally biased toward basic and acidic residues: residues 374–394 (HSQKRNHEGKNYPEHNRHDAV) and 410–427 (HEPKRNSAAESYRNEEHG). The span at 429–443 (AVSSNQRPKSSQSDR) shows a compositional bias: polar residues. Phosphoserine; by PLK1 occurs at positions 483, 487, and 491. Residues 583-723 (EQEMNSKRKF…NKKQQLLRDR (141 aa)) are a coiled coil. Over residues 785-800 (QERARLPKNQKAEAKT) the composition is skewed to basic and acidic residues. Residues 785-804 (QERARLPKNQKAEAKTRMTM) are disordered. Residues 898–928 (RENLRPRKKALEDELEHKKEEQEMFFRMNEE) are a coiled coil. The interval 930-951 (AGHPFPSNKPAKFYSFSSPEAS) is disordered.

This sequence belongs to the protein kinase superfamily. STE Ser/Thr protein kinase family. STE20 subfamily. Homodimer. Autophosphorylates. Phosphorylated by plk1/plx1, suggesting the existence of a feedback loop with plk1/plx1. activation of the protein.

The protein localises to the cell membrane. The enzyme catalyses L-seryl-[protein] + ATP = O-phospho-L-seryl-[protein] + ADP + H(+). The catalysed reaction is L-threonyl-[protein] + ATP = O-phospho-L-threonyl-[protein] + ADP + H(+). May act as a polo kinase kinase by mediating phosphorylation of plk1/plx1 and subsequent activation of plk1/plx1 during oocyte maturation. This chain is Serine/threonine-protein kinase 10 (stk10), found in Xenopus tropicalis (Western clawed frog).